A 319-amino-acid chain; its full sequence is Ankyrin repeat domain-containing protein 1 (319 aa).

A coiled-coil region spans residues 61-89 (KTEKQREAELKKKKLEQRSKLENLEDLEI). ANK repeat units lie at residues 152–181 (YKRTALHRACLEGHLAIVEKLIEAGAQIEF), 185–214 (LESTAIHWASRGGSLDVLKLLLNKGAKISA), 218–247 (LLSTPLHVAVRTGHYECAEHLIACEADLNA), 251–280 (EGDTPLHDAVRLNRYKMIRLLITYGADLNV), and 284–315 (AGKTPMDLVLHWQNGTKAIFDSLKENSYKASR).

Interacts with TTN/titin and YBX1.

The protein localises to the nucleus. May play an important role in endothelial cell activation. May act as a nuclear transcription factor that negatively regulates the expression of cardiac genes. The polypeptide is Ankyrin repeat domain-containing protein 1 (ANKRD1) (Bos taurus (Bovine)).